The sequence spans 637 residues: MSRKASEDVEYTLRSLSSLMGERRRRQPEPGAPGGERSLLAAESAASLQGAELERAARRQFQRDETPAFVYAAAAFSALGGFLFGYDTGVVSGAMLLLRRQMRLGAMWQELLVSGAVGAAAVAALAGGALNGALGRRSAILLASALCTVGSAVLAAAANKETLLAGRLVVGLGIGIASMTVPVYIAEVSPPNLRGRLVTINTLFITGGQFFASVVDGAFSYLQKDGWRYMLGLAAIPAVIQFLGFLFLPESPRWLIQKGQTQKARRILSQMRGNQTIDEEYDSIRNSIEEEEKEASAAGPIICRMLSYPPTRRALAVGCGLQMFQQLSGINTIMYYSATILQMSGVEDDRLAIWLASITAFTNFIFTLVGVWLVEKVGRRKLTFGSLAGTTVALTILALGFLLSAQVSPRVTFRPTAPSGQNATCTEYSYCNECMLDPDCGFCYKINSSAVIDSSCVPVNKASTNEAAWGRCENETKFKAEDVHWAYSFCPTPYSWTALVGLVLYLVFFAPGMGPMPWTVNSEIYPLWARSTGNACSAGINWIFNVLVSLTFLHTAEYLTYYGAFFLYAGFAAVGLLFVYGCLPETKGKKLEEIESLFDHRLCTCGTADSDEGRYIEYIRVKGSNYHLSDNDASDVE.

Topologically, residues 1-65 are cytoplasmic; that stretch reads MSRKASEDVE…AARRQFQRDE (65 aa). Residue Ser6 is modified to Phosphoserine. The disordered stretch occupies residues 16–38; sequence LSSLMGERRRRQPEPGAPGGERS. Phosphoserine occurs at positions 44 and 47. The helical transmembrane segment at 66–86 threads the bilayer; that stretch reads TPAFVYAAAAFSALGGFLFGY. Residues 87 to 114 are Extracellular-facing; the sequence is DTGVVSGAMLLLRRQMRLGAMWQELLVS. Residues 115–135 traverse the membrane as a helical segment; it reads GAVGAAAVAALAGGALNGALG. Topologically, residues 136 to 137 are cytoplasmic; the sequence is RR. The helical transmembrane segment at 138 to 158 threads the bilayer; that stretch reads SAILLASALCTVGSAVLAAAA. The Extracellular segment spans residues 159 to 167; that stretch reads NKETLLAGR. The helical transmembrane segment at 168 to 188 threads the bilayer; sequence LVVGLGIGIASMTVPVYIAEV. The Cytoplasmic portion of the chain corresponds to 189-201; it reads SPPNLRGRLVTIN. A helical membrane pass occupies residues 202 to 222; sequence TLFITGGQFFASVVDGAFSYL. Over 223–228 the chain is Extracellular; that stretch reads QKDGWR. The chain crosses the membrane as a helical span at residues 229–249; the sequence is YMLGLAAIPAVIQFLGFLFLP. At 250-313 the chain is on the cytoplasmic side; it reads ESPRWLIQKG…RMLSYPPTRR (64 aa). A helical membrane pass occupies residues 314 to 334; the sequence is ALAVGCGLQMFQQLSGINTIM. At 335 to 352 the chain is on the extracellular side; it reads YYSATILQMSGVEDDRLA. The helical transmembrane segment at 353–373 threads the bilayer; that stretch reads IWLASITAFTNFIFTLVGVWL. The Cytoplasmic segment spans residues 374-382; sequence VEKVGRRKL. Residues 383 to 403 form a helical membrane-spanning segment; it reads TFGSLAGTTVALTILALGFLL. Residues 404 to 497 lie on the Extracellular side of the membrane; it reads SAQVSPRVTF…SFCPTPYSWT (94 aa). Residues Asn422, Asn447, and Asn474 are each glycosylated (N-linked (GlcNAc...) asparagine). The helical transmembrane segment at 498–518 threads the bilayer; that stretch reads ALVGLVLYLVFFAPGMGPMPW. Topologically, residues 519-538 are cytoplasmic; that stretch reads TVNSEIYPLWARSTGNACSA. A helical transmembrane segment spans residues 539 to 559; the sequence is GINWIFNVLVSLTFLHTAEYL. The Extracellular portion of the chain corresponds to 560–562; it reads TYY. A helical membrane pass occupies residues 563-583; that stretch reads GAFFLYAGFAAVGLLFVYGCL. Topologically, residues 584 to 637 are cytoplasmic; sequence PETKGKKLEEIESLFDHRLCTCGTADSDEGRYIEYIRVKGSNYHLSDNDASDVE. Phosphoserine occurs at positions 629 and 634.

Belongs to the major facilitator superfamily. Sugar transporter (TC 2.A.1.1) family.

The protein localises to the cell membrane. The enzyme catalyses myo-inositol(out) + H(+)(out) = myo-inositol(in) + H(+)(in). Functionally, h(+)-myo-inositol cotransporter. Can also transport related stereoisomers. This Rattus norvegicus (Rat) protein is Proton myo-inositol cotransporter.